The sequence spans 422 residues: MVRGSLGKLASRALSVAGKWQHQQLRRLNIHEYQGAELMGKYGINVPRGAAAGSVEEVKNTLKNVFPSEKEIVVKSQILAGGRGLGTFKSGLQGGVHIVKAEEAESLAAKMLGQILVTKQTGPQGKIVSKVYLCEKLSLVNEMYFAITLDRNTAGPLIIACSKGGTSIEDLAEKYPDMIIKVPIDVFKGITDDDAAKVVDGLAPKTADRQSSIEQIKKLYELFCKSDCTLLEINPLAETADNKLVAADAKLNFDDNAAFRQKEIFAMRDTTQEDPREVAAAKADLNYIGLDGEIGCMVNGAGLAMATMDIIKLHGGTPANFLDVGGSASEGQVVEAFKILTSDDRVKAILVNIFGGIMKCDVIASGIVNAAKQVDLKVPVVVRLEGTNVDQGKRILKESGMTLITAEDLDDAAEKAVKASVK.

The transit peptide at 1–27 (MVRGSLGKLASRALSVAGKWQHQQLRR) directs the protein to the mitochondrion. The region spanning 36 to 279 (AELMGKYGIN…TTQEDPREVA (244 aa)) is the ATP-grasp domain. ATP is bound by residues K75, 82–84 (GRG), and E142. Residues N234 and D248 each coordinate Mg(2+). Substrate contacts are provided by residues N299 and 356–358 (GIM).

Belongs to the succinate/malate CoA ligase beta subunit family. Heterodimer of an alpha and a beta subunit. It depends on Mg(2+) as a cofactor.

It localises to the mitochondrion. It carries out the reaction succinate + ATP + CoA = succinyl-CoA + ADP + phosphate. Its pathway is carbohydrate metabolism; tricarboxylic acid cycle; succinate from succinyl-CoA (ligase route): step 1/1. Its function is as follows. Succinyl-CoA synthetase functions in the citric acid cycle (TCA), coupling the hydrolysis of succinyl-CoA to the synthesis of ATP and thus represents the only step of substrate-level phosphorylation in the TCA. The beta subunit provides nucleotide specificity of the enzyme and binds the substrate succinate, while the binding sites for coenzyme A and phosphate are found in the alpha subunit. This chain is Succinate--CoA ligase [ADP-forming] subunit beta, mitochondrial, found in Oryza sativa subsp. japonica (Rice).